A 194-amino-acid polypeptide reads, in one-letter code: MTIKLIAGLGNPGPEYSKTRHNAGVWFVEELARSHNISLRPEKKYSGLYGKGLIAGNLVHLLIPTTFMNRSGQAVAPLANFYKISVDEILVAHDELDMLPGVCKIKKGGGHGGHNGLRDIIDRMANNKDFYRLRIGIDHPGHRDKVTGHVLGKAPSAEQAKIEQAIDEASRCLDIWLKDDLKKAQNRLHSFKAE.

A tRNA-binding site is contributed by tyrosine 16. The active-site Proton acceptor is histidine 21. Phenylalanine 67, asparagine 69, and asparagine 115 together coordinate tRNA.

The protein belongs to the PTH family. In terms of assembly, monomer.

The protein resides in the cytoplasm. It carries out the reaction an N-acyl-L-alpha-aminoacyl-tRNA + H2O = an N-acyl-L-amino acid + a tRNA + H(+). In terms of biological role, hydrolyzes ribosome-free peptidyl-tRNAs (with 1 or more amino acids incorporated), which drop off the ribosome during protein synthesis, or as a result of ribosome stalling. Catalyzes the release of premature peptidyl moieties from peptidyl-tRNA molecules trapped in stalled 50S ribosomal subunits, and thus maintains levels of free tRNAs and 50S ribosomes. The sequence is that of Peptidyl-tRNA hydrolase from Colwellia psychrerythraea (strain 34H / ATCC BAA-681) (Vibrio psychroerythus).